A 333-amino-acid chain; its full sequence is SPbeta prophage-derived recombinase-like protein YomM (333 aa).

One can recognise a Core-binding (CB) domain in the interval 30–113 (EEHRNLVQEF…GVSSLNNYIE (84 aa)). Positions 142-332 (YEKVKVTYDD…DFEEEKNQIF (191 aa)) constitute a Tyr recombinase domain. Active-site residues include Arg180, Lys211, His281, and His308. Catalysis depends on Tyr319, which acts as the O-(3'-phospho-DNA)-tyrosine intermediate.

The protein belongs to the 'phage' integrase family.

This Bacillus subtilis (strain 168) protein is SPbeta prophage-derived recombinase-like protein YomM (yomM).